A 68-amino-acid polypeptide reads, in one-letter code: MRQDIHPKYSEITVTCSCGNSFSTRSTAGKDFHIEVCSACHPFYTGKQKLLDTAGRVDKFRQRYNLKS.

The Zn(2+) site is built by cysteine 16, cysteine 18, cysteine 37, and cysteine 40.

Belongs to the bacterial ribosomal protein bL31 family. Type A subfamily. Part of the 50S ribosomal subunit. Zn(2+) is required as a cofactor.

Its function is as follows. Binds the 23S rRNA. The polypeptide is Large ribosomal subunit protein bL31 (Nitrosococcus oceani (strain ATCC 19707 / BCRC 17464 / JCM 30415 / NCIMB 11848 / C-107)).